The sequence spans 302 residues: Meiotic recombination protein rec14 (302 aa).

WD repeat units lie at residues A14 to V51, P57 to L96, Q101 to E140, D142 to S184, G185 to R226, G227 to T266, and E269 to E302.

Component of the DSB catalytic core (DSBC) complex, composed of at least rec12, rec6 and rec14. The complex interacts with mde2.

Required for formation of the rec12-mediated double-strand breaks (DSBs) that initiate meiotic recombination. The polypeptide is Meiotic recombination protein rec14 (Schizosaccharomyces pombe (strain 972 / ATCC 24843) (Fission yeast)).